Here is a 320-residue protein sequence, read N- to C-terminus: METGNQTHAQEFLLLGFSATSEIQFILFGLFLSMYLVTFTGNLLIILAICSDSHLHTPMYFFLSNLSFADLCFTSTTVPKMLLNILTQNKFITYAGCLSQIFFFTSFGCLDNLLLTVMAYDRFVAVCHPLHYTVIMNPQLCGLLVLGSWCISVMGSLLETLTVLRLSFCTEMEIPHFFCDLLEVLKLACSDTFINNVVIYFATGVLGVISFTGIFFSYYKIVFSILRISSAGRKHKAFSTCGSHLSVVTLFYGTGFGVYLSSAATPSSRTSLVASVMYTMVTPMLNPFIYSLRNTDMKRALGRLLSRATFFNGDITAGLS.

At 1–25 (METGNQTHAQEFLLLGFSATSEIQF) the chain is on the extracellular side. N5 carries an N-linked (GlcNAc...) asparagine glycan. A helical membrane pass occupies residues 26–46 (ILFGLFLSMYLVTFTGNLLII). Topologically, residues 47–54 (LAICSDSH) are cytoplasmic. Residues 55 to 75 (LHTPMYFFLSNLSFADLCFTS) traverse the membrane as a helical segment. Residues 76 to 99 (TTVPKMLLNILTQNKFITYAGCLS) are Extracellular-facing. A disulfide bridge connects residues C97 and C189. A helical membrane pass occupies residues 100–120 (QIFFFTSFGCLDNLLLTVMAY). Residues 121–139 (DRFVAVCHPLHYTVIMNPQ) lie on the Cytoplasmic side of the membrane. Residues 140-160 (LCGLLVLGSWCISVMGSLLET) traverse the membrane as a helical segment. At 161–197 (LTVLRLSFCTEMEIPHFFCDLLEVLKLACSDTFINNV) the chain is on the extracellular side. Residues 198-217 (VIYFATGVLGVISFTGIFFS) traverse the membrane as a helical segment. The Cytoplasmic portion of the chain corresponds to 218–237 (YYKIVFSILRISSAGRKHKA). Residues 238-258 (FSTCGSHLSVVTLFYGTGFGV) traverse the membrane as a helical segment. Residues 259–271 (YLSSAATPSSRTS) are Extracellular-facing. Residues 272–292 (LVASVMYTMVTPMLNPFIYSL) traverse the membrane as a helical segment. Residues 293 to 313 (RNTDMKRALGRLLSRATFFNG) lie on the Cytoplasmic side of the membrane.

Belongs to the G-protein coupled receptor 1 family.

Its subcellular location is the cell membrane. Functionally, odorant receptor. This chain is Olfactory receptor 7C1 (OR7C1), found in Homo sapiens (Human).